The primary structure comprises 484 residues: Probable glycine dehydrogenase (decarboxylating) subunit 2 (484 aa).

Lys-264 carries the post-translational modification N6-(pyridoxal phosphate)lysine.

This sequence belongs to the GcvP family. C-terminal subunit subfamily. In terms of assembly, the glycine cleavage system is composed of four proteins: P, T, L and H. In this organism, the P 'protein' is a heterodimer of two subunits. The cofactor is pyridoxal 5'-phosphate.

It catalyses the reaction N(6)-[(R)-lipoyl]-L-lysyl-[glycine-cleavage complex H protein] + glycine + H(+) = N(6)-[(R)-S(8)-aminomethyldihydrolipoyl]-L-lysyl-[glycine-cleavage complex H protein] + CO2. In terms of biological role, the glycine cleavage system catalyzes the degradation of glycine. The P protein binds the alpha-amino group of glycine through its pyridoxal phosphate cofactor; CO(2) is released and the remaining methylamine moiety is then transferred to the lipoamide cofactor of the H protein. This chain is Probable glycine dehydrogenase (decarboxylating) subunit 2, found in Legionella pneumophila (strain Paris).